Reading from the N-terminus, the 712-residue chain is Saccharolysin (712 aa).

Residue serine 73 is modified to Phosphoserine. Histidine 501 serves as a coordination point for Zn(2+). Residue glutamate 502 is part of the active site. The Zn(2+) site is built by histidine 505 and histidine 508.

The protein belongs to the peptidase M3 family. It depends on Zn(2+) as a cofactor.

It is found in the cytoplasm. It catalyses the reaction Cleavage of Pro-|-Phe and Ala-|-Ala bonds.. Functionally, could be involved in late stage of protein degradation. The sequence is that of Saccharolysin (PRD1) from Saccharomyces cerevisiae (strain ATCC 204508 / S288c) (Baker's yeast).